We begin with the raw amino-acid sequence, 129 residues long: Large ribosomal subunit protein bL20 (129 aa).

This sequence belongs to the bacterial ribosomal protein bL20 family.

Its function is as follows. Binds directly to 23S ribosomal RNA and is necessary for the in vitro assembly process of the 50S ribosomal subunit. It is not involved in the protein synthesizing functions of that subunit. The chain is Large ribosomal subunit protein bL20 from Mycobacterium sp. (strain JLS).